A 249-amino-acid polypeptide reads, in one-letter code: Cilia- and flagella-associated protein 410 (249 aa).

3 LRR repeats span residues 19–40 (NVRK…REMP), 41–62 (SLEV…RSCR), and 63–84 (RLSE…FYLK). The region spanning 97–137 (NPCCGTSPHLYRMTVLRNLPHLQKLDNQAVTEEELTRALME) is the LRRCT domain. Residues 146–203 (HREGAGNGCPKPPYALNSVSSATETSQHLLSYTEETEVQGQTTTDQSPSFSPRDTMRS) are disordered. Residues 162 to 175 (NSVSSATETSQHLL) are compositionally biased toward polar residues.

In terms of assembly, found in a complex with CFAP410, NEK1 and SPATA7. Interacts with NEK1. Expressed in the retina.

It localises to the cell projection. The protein resides in the cilium. Its subcellular location is the cytoplasm. The protein localises to the cytoskeleton. It is found in the cilium basal body. It localises to the mitochondrion. The protein resides in the photoreceptor outer segment. Functionally, plays a role in cilia formation and/or maintenance. Plays a role in the regulation of cell morphology and cytoskeletal organization. Involved in DNA damage repair. This Mus musculus (Mouse) protein is Cilia- and flagella-associated protein 410.